Consider the following 143-residue polypeptide: 3-dehydroquinate dehydratase (143 aa).

Y21 serves as the catalytic Proton acceptor. The substrate site is built by N73, H79, and D86. H99 (proton donor) is an active-site residue. Substrate contacts are provided by residues 100–101 (IS) and R110.

The protein belongs to the type-II 3-dehydroquinase family. As to quaternary structure, homododecamer.

It catalyses the reaction 3-dehydroquinate = 3-dehydroshikimate + H2O. It functions in the pathway metabolic intermediate biosynthesis; chorismate biosynthesis; chorismate from D-erythrose 4-phosphate and phosphoenolpyruvate: step 3/7. Functionally, catalyzes a trans-dehydration via an enolate intermediate. This is 3-dehydroquinate dehydratase from Deinococcus radiodurans (strain ATCC 13939 / DSM 20539 / JCM 16871 / CCUG 27074 / LMG 4051 / NBRC 15346 / NCIMB 9279 / VKM B-1422 / R1).